The following is a 167-amino-acid chain: Endoribonuclease YbeY (167 aa).

Zn(2+)-binding residues include H125, H129, and H135.

It belongs to the endoribonuclease YbeY family. Zn(2+) serves as cofactor.

It is found in the cytoplasm. Functionally, single strand-specific metallo-endoribonuclease involved in late-stage 70S ribosome quality control and in maturation of the 3' terminus of the 16S rRNA. The polypeptide is Endoribonuclease YbeY (Allorhizobium ampelinum (strain ATCC BAA-846 / DSM 112012 / S4) (Agrobacterium vitis (strain S4))).